The following is a 325-amino-acid chain: Biotin synthase (325 aa).

The Radical SAM core domain occupies 49-278 (FNGNIVDLCS…KASIRLAGGR (230 aa)). Cysteine 67, cysteine 71, and cysteine 74 together coordinate [4Fe-4S] cluster. The [2Fe-2S] cluster site is built by serine 111, cysteine 143, cysteine 203, and arginine 273.

The protein belongs to the radical SAM superfamily. Biotin synthase family. In terms of assembly, homodimer. [4Fe-4S] cluster serves as cofactor. Requires [2Fe-2S] cluster as cofactor.

The catalysed reaction is (4R,5S)-dethiobiotin + (sulfur carrier)-SH + 2 reduced [2Fe-2S]-[ferredoxin] + 2 S-adenosyl-L-methionine = (sulfur carrier)-H + biotin + 2 5'-deoxyadenosine + 2 L-methionine + 2 oxidized [2Fe-2S]-[ferredoxin]. The protein operates within cofactor biosynthesis; biotin biosynthesis; biotin from 7,8-diaminononanoate: step 2/2. Catalyzes the conversion of dethiobiotin (DTB) to biotin by the insertion of a sulfur atom into dethiobiotin via a radical-based mechanism. In Clostridium tetani (strain Massachusetts / E88), this protein is Biotin synthase.